The sequence spans 875 residues: Probable inorganic carbon transporter subunit DabA (875 aa).

The Zn(2+) site is built by cysteine 380, aspartate 382, histidine 563, and cysteine 578.

The protein belongs to the inorganic carbon transporter (TC 9.A.2) DabA family. As to quaternary structure, forms a complex with DabB. The cofactor is Zn(2+).

The protein localises to the cell membrane. Part of an energy-coupled inorganic carbon pump. In Geobacillus thermodenitrificans (strain NG80-2), this protein is Probable inorganic carbon transporter subunit DabA.